The following is an 822-amino-acid chain: Cation/H(+) antiporter 3 (822 aa).

Transmembrane regions (helical) follow at residues 55–75, 116–136, 150–170, 190–210, 224–244, 274–294, 305–325, 331–351, 362–382, 388–408, 418–438, and 447–467; these read FPHLQMIFLIISFLWQFLHFF, EIVFSLTAACSYMMFWFLMGV, AITIGLSSVLLSTLVCSVIFF, YVVIYSIQCLSSFPVVGNLLF, ISSAVISDFSTSILASVLIFM, IVVLFVCIAIYVFRPLMFYII, AIYLSTIIVMVSGSAILANWC, MGPFILGLAVPHGPPLGSAII, FLPFFIASSSTEIDISALFGW, IILIMVTSFVVKFIFTTVPAL, FALSLIMSFKGIFELGAYALA, and ETFTVACLYITLNSAIIPPIL.

Belongs to the monovalent cation:proton antiporter 2 (CPA2) transporter (TC 2.A.37) family. CHX (TC 2.A.37.4) subfamily.

The protein localises to the membrane. In terms of biological role, may operate as a cation/H(+) antiporter. The protein is Cation/H(+) antiporter 3 (CHX3) of Arabidopsis thaliana (Mouse-ear cress).